The primary structure comprises 237 residues: MRPSRRAPDELRAVSLERGVVKYAEGSCMVKFGDTHVLVTATLEERLPPWLKGQGRGWVTAEYGMLPRATLERTRREASAGKQGGRTVEIQRLIGRSLRAAVDLEALGERQITVDCDVIQADGGTRTASITGAWVALADCIGWMKARNMIKTSVLRDNVAAVSCGIYNGTPVLDLDYAEDSEADTDANFVMTGDGRIIEVQGTAEKTPFSQDEFLALLALAKKGVARLVDLQKMAVA.

Residues arginine 86 and 124–126 each bind phosphate; that span reads GTR.

The protein belongs to the RNase PH family. Homohexameric ring arranged as a trimer of dimers.

The enzyme catalyses tRNA(n+1) + phosphate = tRNA(n) + a ribonucleoside 5'-diphosphate. Its function is as follows. Phosphorolytic 3'-5' exoribonuclease that plays an important role in tRNA 3'-end maturation. Removes nucleotide residues following the 3'-CCA terminus of tRNAs; can also add nucleotides to the ends of RNA molecules by using nucleoside diphosphates as substrates, but this may not be physiologically important. Probably plays a role in initiation of 16S rRNA degradation (leading to ribosome degradation) during starvation. The polypeptide is Ribonuclease PH (Nitrobacter hamburgensis (strain DSM 10229 / NCIMB 13809 / X14)).